Consider the following 323-residue polypeptide: MPSVSEAKREYEERFNGCLTKYGRVLFCLMDNVRSQQVHDVRRDLRGLGELVMGKKTLQKKIVERRAEDKKASAYDKLLYNTCIEKKLLCGNTALIFTNEEIPVITAVLDKHRVQAPARVGAIAPCDVIVPAGNTGMEPKATSFFQALNIATKIAKGTVEIVSDKKVLSVGDRVDNSTATLLQKLDISPFYYQVEVQSVWDRGMLFLREDLSITDDVVEKYLLEGISNVAALSLGAGIPTAATLPHMIMDAFKTLLGASVATEYEFDEFDGKNLRKAALEGNLGGGVADAAAAADTGAAAAPAAAAEPEEEDDDDDFGMGALF.

Residues Ala-298 to Phe-323 form a disordered region. The span at Glu-307–Phe-317 shows a compositional bias: acidic residues.

It belongs to the universal ribosomal protein uL10 family. P0 forms a pentameric complex by interaction with dimers of P1 and P2. In terms of processing, phosphorylated.

Functionally, ribosomal protein P0 is the functional equivalent of E.coli protein L10. This Trypanosoma cruzi protein is Large ribosomal subunit protein uL10.